We begin with the raw amino-acid sequence, 207 residues long: MNTPVEKPWILGLTGGIGSGKSAAAQHFIDLGIHVVDADHAARWVVEPGRPALAKIAEHFGPDVLQADGTLDRAALRKLIFEVPEQRRWLEALLHPLIAEEIAHHLALAKSPYAILVSPLLIESGQYAMTQRILVIDAPQQLQIERTLQRDQTSEQQVQAILKAQSSREDRISRADDVVVNDRDLAWLHSEVERLHHFYLTLSGGQS.

The 198-residue stretch at 10–207 folds into the DPCK domain; sequence ILGLTGGIGS…FYLTLSGGQS (198 aa). An ATP-binding site is contributed by 18 to 23; the sequence is GSGKSA.

Belongs to the CoaE family.

Its subcellular location is the cytoplasm. The catalysed reaction is 3'-dephospho-CoA + ATP = ADP + CoA + H(+). It functions in the pathway cofactor biosynthesis; coenzyme A biosynthesis; CoA from (R)-pantothenate: step 5/5. Its function is as follows. Catalyzes the phosphorylation of the 3'-hydroxyl group of dephosphocoenzyme A to form coenzyme A. The polypeptide is Dephospho-CoA kinase (Pseudomonas fluorescens (strain Pf0-1)).